We begin with the raw amino-acid sequence, 392 residues long: Galactokinase (392 aa).

R37, E43, H44, and D46 together coordinate alpha-D-galactose. ATP is bound by residues G136, G138, S140, and S141. D186 serves as a coordination point for alpha-D-galactose. D186 serves as the catalytic Proton acceptor. S230 carries the phosphoserine modification. Residue Y236 participates in alpha-D-galactose binding.

It belongs to the GHMP kinase family. GalK subfamily. Homodimer.

The enzyme catalyses alpha-D-galactose + ATP = alpha-D-galactose 1-phosphate + ADP + H(+). The protein operates within carbohydrate metabolism; galactose metabolism. Its function is as follows. Catalyzes the transfer of a phosphate from ATP to alpha-D-galactose and participates in the first committed step in the catabolism of galactose. The polypeptide is Galactokinase (Galk1) (Mus musculus (Mouse)).